A 429-amino-acid chain; its full sequence is Carbamoyl phosphate synthase arginine-specific small chain (429 aa).

Residues methionine 1–leucine 20 constitute a mitochondrion transit peptide. The 189-residue stretch at histidine 218 to threonine 406 folds into the Glutamine amidotransferase type-1 domain. Catalysis depends on cysteine 295, which acts as the Nucleophile. Active-site residues include histidine 379 and glutamate 381.

This sequence belongs to the CarA family. As to quaternary structure, heterodimer composed of 2 chains; the small (or glutamine) chain promotes the hydrolysis of glutamine to ammonia, which is used by the large (or ammonia) chain to synthesize carbamoyl phosphate.

The protein localises to the mitochondrion matrix. It carries out the reaction hydrogencarbonate + L-glutamine + 2 ATP + H2O = carbamoyl phosphate + L-glutamate + 2 ADP + phosphate + 2 H(+). The catalysed reaction is L-glutamine + H2O = L-glutamate + NH4(+). It participates in amino-acid biosynthesis; L-arginine biosynthesis; carbamoyl phosphate from bicarbonate: step 1/1. Small subunit of the arginine-specific carbamoyl phosphate synthase (CPSase). CPSase catalyzes the formation of carbamoyl phosphate from the ammonia moiety of glutamine, carbonate, and phosphate donated by ATP, the first step of the arginine biosynthetic pathway. The small subunit (glutamine amidotransferase) binds and cleaves glutamine to supply the large subunit with the substrate ammonia. The chain is Carbamoyl phosphate synthase arginine-specific small chain (CPA1) from Debaryomyces hansenii (strain ATCC 36239 / CBS 767 / BCRC 21394 / JCM 1990 / NBRC 0083 / IGC 2968) (Yeast).